The primary structure comprises 305 residues: MLDTQIQELIIKWQKYLSLQKNYSNHTLISYNNDLKHFLEFMNYYNSDIVTMDYIKAADIRLMRSWLAKRKCDNFVTSSIARGLSAIKNFYKFLEKTAELHNHVVFSIKSPKKSKLLPKALSEEEVNISLDHIEEYGNSQWIEIRNKALLVLIYASGLRISEALSITKLHLQNLEFIKIMGKGSKERVIPWLAIARNLITEYLEKLPYELKDDEPIFRGKQGKKLQPPVFNRELIKLKRFYGLPEYLSAHSFRHSFASHLLENGADLRSIQELLGHKSLSTTQSYTKTSIKHLETAYVTAHPIKK.

The 92-residue stretch at 4-95 (TQIQELIIKW…AIKNFYKFLE (92 aa)) folds into the Core-binding (CB) domain. The 183-residue stretch at 116–298 (LLPKALSEEE…SIKHLETAYV (183 aa)) folds into the Tyr recombinase domain. Residues Arg159, Lys182, His250, Arg253, and His276 contribute to the active site. Residue Tyr285 is the O-(3'-phospho-DNA)-tyrosine intermediate of the active site.

Belongs to the 'phage' integrase family. XerC subfamily. Forms a cyclic heterotetrameric complex composed of two molecules of XerC and two molecules of XerD.

It is found in the cytoplasm. In terms of biological role, site-specific tyrosine recombinase, which acts by catalyzing the cutting and rejoining of the recombining DNA molecules. The XerC-XerD complex is essential to convert dimers of the bacterial chromosome into monomers to permit their segregation at cell division. It also contributes to the segregational stability of plasmids. This chain is Tyrosine recombinase XerC, found in Rickettsia bellii (strain RML369-C).